A 422-amino-acid chain; its full sequence is Probable protein phosphatase 2C 43 (422 aa).

Residues Ser117–Phe393 enclose the PPM-type phosphatase domain. Asp163, Gly164, Asp341, and Asp384 together coordinate Mn(2+).

The protein belongs to the PP2C family. Mg(2+) serves as cofactor. It depends on Mn(2+) as a cofactor.

The enzyme catalyses O-phospho-L-seryl-[protein] + H2O = L-seryl-[protein] + phosphate. It carries out the reaction O-phospho-L-threonyl-[protein] + H2O = L-threonyl-[protein] + phosphate. This is Probable protein phosphatase 2C 43 from Arabidopsis thaliana (Mouse-ear cress).